The following is a 380-amino-acid chain: Succinyl-diaminopimelate desuccinylase (380 aa).

Residue H69 participates in Zn(2+) binding. The active site involves D71. A Zn(2+)-binding site is contributed by D102. The active-site Proton acceptor is the E135. E136, E164, and H353 together coordinate Zn(2+).

Belongs to the peptidase M20A family. DapE subfamily. As to quaternary structure, homodimer. It depends on Zn(2+) as a cofactor. Co(2+) serves as cofactor.

The catalysed reaction is N-succinyl-(2S,6S)-2,6-diaminopimelate + H2O = (2S,6S)-2,6-diaminopimelate + succinate. It participates in amino-acid biosynthesis; L-lysine biosynthesis via DAP pathway; LL-2,6-diaminopimelate from (S)-tetrahydrodipicolinate (succinylase route): step 3/3. Its function is as follows. Catalyzes the hydrolysis of N-succinyl-L,L-diaminopimelic acid (SDAP), forming succinate and LL-2,6-diaminopimelate (DAP), an intermediate involved in the bacterial biosynthesis of lysine and meso-diaminopimelic acid, an essential component of bacterial cell walls. The chain is Succinyl-diaminopimelate desuccinylase from Cereibacter sphaeroides (strain ATCC 17029 / ATH 2.4.9) (Rhodobacter sphaeroides).